Here is a 114-residue protein sequence, read N- to C-terminus: Fluoride-specific ion channel FluC 1 (114 aa).

3 helical membrane-spanning segments follow: residues 23-43 (ATLT…SYVF), 52-72 (LSTA…TLSV), and 84-104 (FLAM…SHLG). Na(+) contacts are provided by glycine 62 and threonine 65.

Belongs to the fluoride channel Fluc/FEX (TC 1.A.43) family.

It localises to the cell membrane. The catalysed reaction is fluoride(in) = fluoride(out). With respect to regulation, na(+) is not transported, but it plays an essential structural role and its presence is essential for fluoride channel function. Fluoride-specific ion channel. Important for reducing fluoride concentration in the cell, thus reducing its toxicity. This Desulfitobacterium hafniense (strain Y51) protein is Fluoride-specific ion channel FluC 1.